Here is a 502-residue protein sequence, read N- to C-terminus: uncharacterized protein (502 aa).

Residues 1-21 form a helical membrane-spanning segment; that stretch reads MKIFLVILSVFFFNGCFGLAY. 2 PLD phosphodiesterase domains span residues 162–189 and 396–423; these read IKKRMHNKLFIVDNFAVIIGGRNIGDNY and TKHSLHGKTIVFDDALTLLGSFNIDPRS.

This sequence belongs to the phospholipase D family. Cardiolipin synthase subfamily.

Its subcellular location is the cell membrane. This is an uncharacterized protein from Helicobacter pylori (strain J99 / ATCC 700824) (Campylobacter pylori J99).